Consider the following 109-residue polypeptide: uncharacterized protein (109 aa).

A helical transmembrane segment spans residues 63–85 (LFVKTFFACTYIIMLAFQVYIFL).

The protein localises to the membrane. This is an uncharacterized protein from Saccharomyces cerevisiae (strain ATCC 204508 / S288c) (Baker's yeast).